The chain runs to 254 residues: Trypsin 3A1 (254 aa).

Residues 1 to 20 form the signal peptide; it reads MNQFLFVSFCALLGLSQVSA. A propeptide spans 21–27 (activation peptide); the sequence is ATLSSGR. A Peptidase S1 domain is found at 28–253; the sequence is IVGGFQIDIA…VRQWIREVSE (226 aa). The cysteines at positions 53 and 69 are disulfide-linked. Residues His68 and Asp113 each act as charge relay system in the active site. 2 cysteine pairs are disulfide-bonded: Cys178–Cys194 and Cys205–Cys229. Residue Ser209 is the Charge relay system of the active site.

It belongs to the peptidase S1 family. In terms of tissue distribution, midgut.

Its subcellular location is the secreted. It is found in the extracellular space. It carries out the reaction Preferential cleavage: Arg-|-Xaa, Lys-|-Xaa.. In terms of biological role, major function may be to aid in digestion of the blood meal. In Aedes aegypti (Yellowfever mosquito), this protein is Trypsin 3A1.